We begin with the raw amino-acid sequence, 212 residues long: Pyridoxine/pyridoxamine 5'-phosphate oxidase (212 aa).

Substrate is bound by residues 7–10 (RREY) and K65. FMN contacts are provided by residues 60-65 (RIVLLK), 75-76 (FT), R81, K82, and Q104. Positions 122, 126, and 130 each coordinate substrate. FMN is bound by residues 139-140 (QS) and W184. Position 190–192 (190–192 (RLH)) interacts with substrate. Residue R194 coordinates FMN.

It belongs to the pyridoxamine 5'-phosphate oxidase family. Homodimer. Requires FMN as cofactor.

It catalyses the reaction pyridoxamine 5'-phosphate + O2 + H2O = pyridoxal 5'-phosphate + H2O2 + NH4(+). The enzyme catalyses pyridoxine 5'-phosphate + O2 = pyridoxal 5'-phosphate + H2O2. It functions in the pathway cofactor metabolism; pyridoxal 5'-phosphate salvage; pyridoxal 5'-phosphate from pyridoxamine 5'-phosphate: step 1/1. It participates in cofactor metabolism; pyridoxal 5'-phosphate salvage; pyridoxal 5'-phosphate from pyridoxine 5'-phosphate: step 1/1. Catalyzes the oxidation of either pyridoxine 5'-phosphate (PNP) or pyridoxamine 5'-phosphate (PMP) into pyridoxal 5'-phosphate (PLP). The protein is Pyridoxine/pyridoxamine 5'-phosphate oxidase of Pseudoalteromonas translucida (strain TAC 125).